Consider the following 271-residue polypeptide: 3-methyl-2-oxobutanoate hydroxymethyltransferase (271 aa).

Mg(2+) is bound by residues Asp52 and Asp91. 3-methyl-2-oxobutanoate-binding positions include 52 to 53 (DS), Asp91, and Lys121. Residue Glu123 participates in Mg(2+) binding. Catalysis depends on Glu189, which acts as the Proton acceptor.

Belongs to the PanB family. As to quaternary structure, homodecamer; pentamer of dimers. Requires Mg(2+) as cofactor.

The protein localises to the cytoplasm. The catalysed reaction is 3-methyl-2-oxobutanoate + (6R)-5,10-methylene-5,6,7,8-tetrahydrofolate + H2O = 2-dehydropantoate + (6S)-5,6,7,8-tetrahydrofolate. It functions in the pathway cofactor biosynthesis; (R)-pantothenate biosynthesis; (R)-pantoate from 3-methyl-2-oxobutanoate: step 1/2. In terms of biological role, catalyzes the reversible reaction in which hydroxymethyl group from 5,10-methylenetetrahydrofolate is transferred onto alpha-ketoisovalerate to form ketopantoate. This Acidothermus cellulolyticus (strain ATCC 43068 / DSM 8971 / 11B) protein is 3-methyl-2-oxobutanoate hydroxymethyltransferase.